The chain runs to 256 residues: Ribonuclease HII (256 aa).

An RNase H type-2 domain is found at 72-256 (QYIAGMDEVG…SFNPVPKYLN (185 aa)). Residues Asp78, Glu79, and Asp170 each contribute to the a divalent metal cation site.

Belongs to the RNase HII family. Requires Mn(2+) as cofactor. It depends on Mg(2+) as a cofactor.

The protein localises to the cytoplasm. The enzyme catalyses Endonucleolytic cleavage to 5'-phosphomonoester.. Functionally, endonuclease that specifically degrades the RNA of RNA-DNA hybrids. The protein is Ribonuclease HII of Limosilactobacillus reuteri (strain DSM 20016) (Lactobacillus reuteri).